The chain runs to 331 residues: Glutaminase (331 aa).

Positions 77, 129, 173, 180, 204, 256, and 274 each coordinate substrate.

This sequence belongs to the glutaminase family. In terms of assembly, homotetramer.

It catalyses the reaction L-glutamine + H2O = L-glutamate + NH4(+). This is Glutaminase from Oceanobacillus iheyensis (strain DSM 14371 / CIP 107618 / JCM 11309 / KCTC 3954 / HTE831).